We begin with the raw amino-acid sequence, 116 residues long: MARNWSFRVIFVSAMWCALLKFATLEEPKDGYDYTEGCPFVVLGNGTHAKPAGCSHLCNGAPETLDDNMECYNVTEEVAKRMTPDIPYTCWLGWCSKGECKRDNRTEVCYRGSERE.

Positions 1–25 are cleaved as a signal peptide; it reads MARNWSFRVIFVSAMWCALLKFATL. 4 disulfides stabilise this stretch: cysteine 38–cysteine 58, cysteine 54–cysteine 95, cysteine 71–cysteine 100, and cysteine 90–cysteine 109. Asparagine 45, asparagine 73, and asparagine 104 each carry an N-linked (GlcNAc...) asparagine glycan.

The protein localises to the secreted. Functionally, salivary chemokine-binding protein which binds to host chemokines CCL2, CCL3, CCL4, CCL8 and CCL18. The polypeptide is Evasin P1180 (Amblyomma triste (Neotropical tick)).